The following is a 187-amino-acid chain: UPF0302 protein SERP1032 (187 aa).

The protein belongs to the UPF0302 family.

The sequence is that of UPF0302 protein SERP1032 from Staphylococcus epidermidis (strain ATCC 35984 / DSM 28319 / BCRC 17069 / CCUG 31568 / BM 3577 / RP62A).